Here is a 352-residue protein sequence, read N- to C-terminus: Holliday junction branch migration complex subunit RuvB (352 aa).

The large ATPase domain (RuvB-L) stretch occupies residues 4 to 185; it reads ADRLIAATGP…FGIVQRLEFY (182 aa). ATP-binding positions include Ile24, Arg25, Gly66, Lys69, Thr70, Thr71, 132–134, Arg175, Tyr185, and Arg222; that span reads EDF. Residue Thr70 participates in Mg(2+) binding. The small ATPAse domain (RuvB-S) stretch occupies residues 186 to 256; sequence STADLATIVS…VADLALNLLD (71 aa). The tract at residues 259-352 is head domain (RuvB-H); sequence EHGFDHQDRR…VDEFLDAVDD (94 aa). DNA-binding residues include Arg295, Arg314, and Arg319.

This sequence belongs to the RuvB family. Homohexamer. Forms an RuvA(8)-RuvB(12)-Holliday junction (HJ) complex. HJ DNA is sandwiched between 2 RuvA tetramers; dsDNA enters through RuvA and exits via RuvB. An RuvB hexamer assembles on each DNA strand where it exits the tetramer. Each RuvB hexamer is contacted by two RuvA subunits (via domain III) on 2 adjacent RuvB subunits; this complex drives branch migration. In the full resolvosome a probable DNA-RuvA(4)-RuvB(12)-RuvC(2) complex forms which resolves the HJ.

The protein resides in the cytoplasm. The catalysed reaction is ATP + H2O = ADP + phosphate + H(+). Functionally, the RuvA-RuvB-RuvC complex processes Holliday junction (HJ) DNA during genetic recombination and DNA repair, while the RuvA-RuvB complex plays an important role in the rescue of blocked DNA replication forks via replication fork reversal (RFR). RuvA specifically binds to HJ cruciform DNA, conferring on it an open structure. The RuvB hexamer acts as an ATP-dependent pump, pulling dsDNA into and through the RuvAB complex. RuvB forms 2 homohexamers on either side of HJ DNA bound by 1 or 2 RuvA tetramers; 4 subunits per hexamer contact DNA at a time. Coordinated motions by a converter formed by DNA-disengaged RuvB subunits stimulates ATP hydrolysis and nucleotide exchange. Immobilization of the converter enables RuvB to convert the ATP-contained energy into a lever motion, pulling 2 nucleotides of DNA out of the RuvA tetramer per ATP hydrolyzed, thus driving DNA branch migration. The RuvB motors rotate together with the DNA substrate, which together with the progressing nucleotide cycle form the mechanistic basis for DNA recombination by continuous HJ branch migration. Branch migration allows RuvC to scan DNA until it finds its consensus sequence, where it cleaves and resolves cruciform DNA. This chain is Holliday junction branch migration complex subunit RuvB, found in Pseudomonas fluorescens (strain SBW25).